The following is a 249-amino-acid chain: Secretion system apparatus lipoprotein SsaJ (249 aa).

Positions 1-18 are cleaved as a signal peptide; sequence MKVHRIVFLTVLTFFLTA. Cys19 carries the N-palmitoyl cysteine lipid modification. Cys19 carries S-diacylglycerol cysteine lipidation. A helical transmembrane segment spans residues 225–245; that stretch reads LMLSLTGLLLGVGILIGYFCL.

Belongs to the YscJ lipoprotein family.

The protein localises to the cell outer membrane. In terms of biological role, component of Salmonella pathogenicity island 2 (SPI-2) type III secretion system, required for secretion of some type III-secreted effectors including the SpvB exotoxin. The polypeptide is Secretion system apparatus lipoprotein SsaJ (ssaJ) (Salmonella typhimurium (strain 14028s / SGSC 2262)).